A 97-amino-acid polypeptide reads, in one-letter code: Small ribosomal subunit protein uS19 (97 aa).

Residues 74-97 (FSPTRRFGGHPDKKAVKGKIEKQG) are disordered. The span at 82-97 (GHPDKKAVKGKIEKQG) shows a compositional bias: basic and acidic residues.

It belongs to the universal ribosomal protein uS19 family.

Functionally, protein S19 forms a complex with S13 that binds strongly to the 16S ribosomal RNA. The polypeptide is Small ribosomal subunit protein uS19 (Petrotoga mobilis (strain DSM 10674 / SJ95)).